The primary structure comprises 558 residues: MEESAPFSIVSTVKALSGALRGDAGHEADISREREKLWFKESSAKNLRNRDFLAPNTVLTTLYAGGEVPSDILSAVHTLRGSGVLPIGATEVTTEGLRVCVDRCAAFRGVLCGIMPYLKPAAQRQGCVLINCPALHTKQSVPSPDTLALGQLRTILIADHLGAQLRRQGYTVSFCPALPQESDIVNFLKTLGIDWPTVPVSWTNEDREEKMKKALENSAYRDRETEKGKRRSRGEEIEGEKRGLKEDVRINLKQVVQDENLNGYDPSLGTCTVQREALCHLAQLDSATADFPASTTTALHVTSCQDEFRQQQTAMLWRAAGATALQRLVICGPVKTPGVQMNAAQYFQLRKAQMKEASEMKYGDQVEGQTWDDIIRVMTSATVRFELLSTVHTSPVTLDVQRDSGVSTKGPRGGVFVMYNCARLHTLFSSYEKGVEQGLYPEIPGGTELDFSALKEEGEWLLLFNYLIPFSEILDQSAQTLEHEGGGARVQLRTEQVCRFLVSLSKDFSSYYNRVHVLGEPLPHLFNQMFCRLLLLRALRELYHSALDSLNLPPIPQL.

Positions 213–240 are disordered; the sequence is KALENSAYRDRETEKGKRRSRGEEIEGE.

The sequence is that of DALR anticodon-binding domain-containing protein 3 (dalrd3) from Danio rerio (Zebrafish).